A 174-amino-acid chain; its full sequence is B3 domain-containing protein At3g06220 (174 aa).

A DNA-binding region (TF-B3) is located at residues 8-101 (PRFYTVFLSC…SYEVSIYGRG (94 aa)). Residues 114 to 174 (EISDESESDN…ISDASDSDYY (61 aa)) form a disordered region. Composition is skewed to acidic residues over residues 139–150 (ENSDDTEGDNDS) and 164–174 (EISDASDSDYY).

The protein resides in the nucleus. The polypeptide is B3 domain-containing protein At3g06220 (Arabidopsis thaliana (Mouse-ear cress)).